The chain runs to 180 residues: ATP-dependent protease subunit HslV (180 aa).

The active site involves T7. The Na(+) site is built by G165, C168, and T171.

This sequence belongs to the peptidase T1B family. HslV subfamily. A double ring-shaped homohexamer of HslV is capped on each side by a ring-shaped HslU homohexamer. The assembly of the HslU/HslV complex is dependent on binding of ATP.

Its subcellular location is the cytoplasm. The catalysed reaction is ATP-dependent cleavage of peptide bonds with broad specificity.. Its activity is regulated as follows. Allosterically activated by HslU binding. Functionally, protease subunit of a proteasome-like degradation complex believed to be a general protein degrading machinery. The sequence is that of ATP-dependent protease subunit HslV from Bacillus cytotoxicus (strain DSM 22905 / CIP 110041 / 391-98 / NVH 391-98).